Consider the following 205-residue polypeptide: Holliday junction branch migration complex subunit RuvA (205 aa).

The domain I stretch occupies residues 1 to 64 (MIGKLKGVID…EDQIKLFGFR (64 aa)). Positions 65–143 (TDHEREWFRL…SFANVDPTVV (79 aa)) are domain II. Positions 144-154 (HLAGDLDDQRA) are flexible linker. A domain III region spans residues 154–205 (APRPVRDAISALVNLGYGQPQATAAIAAASRGAGENAETAQLIRLGLKELSK).

This sequence belongs to the RuvA family. In terms of assembly, homotetramer. Forms an RuvA(8)-RuvB(12)-Holliday junction (HJ) complex. HJ DNA is sandwiched between 2 RuvA tetramers; dsDNA enters through RuvA and exits via RuvB. An RuvB hexamer assembles on each DNA strand where it exits the tetramer. Each RuvB hexamer is contacted by two RuvA subunits (via domain III) on 2 adjacent RuvB subunits; this complex drives branch migration. In the full resolvosome a probable DNA-RuvA(4)-RuvB(12)-RuvC(2) complex forms which resolves the HJ.

Its subcellular location is the cytoplasm. Functionally, the RuvA-RuvB-RuvC complex processes Holliday junction (HJ) DNA during genetic recombination and DNA repair, while the RuvA-RuvB complex plays an important role in the rescue of blocked DNA replication forks via replication fork reversal (RFR). RuvA specifically binds to HJ cruciform DNA, conferring on it an open structure. The RuvB hexamer acts as an ATP-dependent pump, pulling dsDNA into and through the RuvAB complex. HJ branch migration allows RuvC to scan DNA until it finds its consensus sequence, where it cleaves and resolves the cruciform DNA. The polypeptide is Holliday junction branch migration complex subunit RuvA (Nitrobacter winogradskyi (strain ATCC 25391 / DSM 10237 / CIP 104748 / NCIMB 11846 / Nb-255)).